Here is a 347-residue protein sequence, read N- to C-terminus: Probable cytosolic iron-sulfur protein assembly protein 1 (347 aa).

WD repeat units lie at residues L11–V48, S62–D101, G122–E161, E168–A207, G212–E255, V266–V304, and S311–N347.

This sequence belongs to the WD repeat CIA1 family. Interacts with NAR1.

Its subcellular location is the cytoplasm. The protein resides in the nucleus. Functionally, essential component of the cytosolic iron-sulfur (Fe/S) protein assembly machinery. Required for the maturation of extramitochondrial Fe/S proteins. The sequence is that of Probable cytosolic iron-sulfur protein assembly protein 1 from Vanderwaltozyma polyspora (strain ATCC 22028 / DSM 70294 / BCRC 21397 / CBS 2163 / NBRC 10782 / NRRL Y-8283 / UCD 57-17) (Kluyveromyces polysporus).